Here is a 591-residue protein sequence, read N- to C-terminus: V-type ATP synthase alpha chain (591 aa).

G231–T238 serves as a coordination point for ATP.

It belongs to the ATPase alpha/beta chains family.

The enzyme catalyses ATP + H2O + 4 H(+)(in) = ADP + phosphate + 5 H(+)(out). In terms of biological role, produces ATP from ADP in the presence of a proton gradient across the membrane. The V-type alpha chain is a catalytic subunit. This is V-type ATP synthase alpha chain from Clostridium novyi (strain NT).